Reading from the N-terminus, the 73-residue chain is Translation initiation factor IF-1 (73 aa).

Residues 1–73 form the S1-like domain; that stretch reads MAKKQGAIEI…TRGRIVYRYK (73 aa).

The protein belongs to the IF-1 family. Component of the 30S ribosomal translation pre-initiation complex which assembles on the 30S ribosome in the order IF-2 and IF-3, IF-1 and N-formylmethionyl-tRNA(fMet); mRNA recruitment can occur at any time during PIC assembly.

The protein resides in the cytoplasm. In terms of biological role, one of the essential components for the initiation of protein synthesis. Stabilizes the binding of IF-2 and IF-3 on the 30S subunit to which N-formylmethionyl-tRNA(fMet) subsequently binds. Helps modulate mRNA selection, yielding the 30S pre-initiation complex (PIC). Upon addition of the 50S ribosomal subunit IF-1, IF-2 and IF-3 are released leaving the mature 70S translation initiation complex. The sequence is that of Translation initiation factor IF-1 from Streptomyces coelicolor (strain ATCC BAA-471 / A3(2) / M145).